A 245-amino-acid polypeptide reads, in one-letter code: 2,3-bisphosphoglycerate-dependent phosphoglycerate mutase (245 aa).

Substrate-binding positions include 8–15, 21–22, Arg60, 87–90, Lys98, 114–115, and 183–184; these read RHGQSLWN, TG, ERHY, RR, and GN. Catalysis depends on His9, which acts as the Tele-phosphohistidine intermediate. Glu87 functions as the Proton donor/acceptor in the catalytic mechanism.

Belongs to the phosphoglycerate mutase family. BPG-dependent PGAM subfamily.

The enzyme catalyses (2R)-2-phosphoglycerate = (2R)-3-phosphoglycerate. It functions in the pathway carbohydrate degradation; glycolysis; pyruvate from D-glyceraldehyde 3-phosphate: step 3/5. Functionally, catalyzes the interconversion of 2-phosphoglycerate and 3-phosphoglycerate. In Bacillus cereus (strain ZK / E33L), this protein is 2,3-bisphosphoglycerate-dependent phosphoglycerate mutase.